The following is a 443-amino-acid chain: Proline--tRNA ligase (443 aa).

It belongs to the class-II aminoacyl-tRNA synthetase family. ProS type 2 subfamily. In terms of assembly, homodimer.

The protein localises to the cytoplasm. It carries out the reaction tRNA(Pro) + L-proline + ATP = L-prolyl-tRNA(Pro) + AMP + diphosphate. Its function is as follows. Catalyzes the attachment of proline to tRNA(Pro) in a two-step reaction: proline is first activated by ATP to form Pro-AMP and then transferred to the acceptor end of tRNA(Pro). In Methylobacterium nodulans (strain LMG 21967 / CNCM I-2342 / ORS 2060), this protein is Proline--tRNA ligase.